Consider the following 565-residue polypeptide: Proline--tRNA ligase (565 aa).

It belongs to the class-II aminoacyl-tRNA synthetase family. ProS type 1 subfamily. Homodimer.

The protein localises to the cytoplasm. The enzyme catalyses tRNA(Pro) + L-proline + ATP = L-prolyl-tRNA(Pro) + AMP + diphosphate. Its function is as follows. Catalyzes the attachment of proline to tRNA(Pro) in a two-step reaction: proline is first activated by ATP to form Pro-AMP and then transferred to the acceptor end of tRNA(Pro). As ProRS can inadvertently accommodate and process non-cognate amino acids such as alanine and cysteine, to avoid such errors it has two additional distinct editing activities against alanine. One activity is designated as 'pretransfer' editing and involves the tRNA(Pro)-independent hydrolysis of activated Ala-AMP. The other activity is designated 'posttransfer' editing and involves deacylation of mischarged Ala-tRNA(Pro). The misacylated Cys-tRNA(Pro) is not edited by ProRS. The chain is Proline--tRNA ligase from Francisella tularensis subsp. novicida (strain U112).